The primary structure comprises 306 residues: Ribonuclease Z (306 aa).

His63, His65, Asp67, His68, His141, Asp208, and His266 together coordinate Zn(2+). The active-site Proton acceptor is the Asp67.

The protein belongs to the RNase Z family. In terms of assembly, homodimer. The cofactor is Zn(2+).

It catalyses the reaction Endonucleolytic cleavage of RNA, removing extra 3' nucleotides from tRNA precursor, generating 3' termini of tRNAs. A 3'-hydroxy group is left at the tRNA terminus and a 5'-phosphoryl group is left at the trailer molecule.. In terms of biological role, zinc phosphodiesterase, which displays some tRNA 3'-processing endonuclease activity. Probably involved in tRNA maturation, by removing a 3'-trailer from precursor tRNA. This Chlamydia abortus (strain DSM 27085 / S26/3) (Chlamydophila abortus) protein is Ribonuclease Z.